A 294-amino-acid polypeptide reads, in one-letter code: tRNA pseudouridine synthase B (294 aa).

D39 (nucleophile) is an active-site residue.

Belongs to the pseudouridine synthase TruB family. Type 1 subfamily.

The enzyme catalyses uridine(55) in tRNA = pseudouridine(55) in tRNA. Its function is as follows. Responsible for synthesis of pseudouridine from uracil-55 in the psi GC loop of transfer RNAs. This Streptococcus pyogenes serotype M5 (strain Manfredo) protein is tRNA pseudouridine synthase B.